The sequence spans 81 residues: Short neurotoxin 2 (81 aa).

Residues 1–21 (MKTLLLTLVVVTIVCLDLGYT) form the signal peptide. 4 disulfide bridges follow: C24-C43, C38-C60, C62-C73, and C74-C79.

This sequence belongs to the three-finger toxin family. Short-chain subfamily. Type I alpha-neurotoxin sub-subfamily. In terms of tissue distribution, expressed by the venom gland.

It is found in the secreted. Binds to muscle nicotinic acetylcholine receptor (nAChR) and inhibit acetylcholine from binding to the receptor, thereby impairing neuromuscular transmission. This Hydrophis peronii (Spiny-headed seasnake) protein is Short neurotoxin 2.